A 1009-amino-acid chain; its full sequence is Chitin synthase 2 (1009 aa).

2 stretches are compositionally biased toward polar residues: residues 1-12 (MSYNNPNNSNSH) and 34-62 (EFLN…LNFQ). 2 disordered regions span residues 1 to 62 (MSYN…LNFQ) and 175 to 234 (DESQ…EVRS). Positions 192–202 (EGEEEEEEGET) are enriched in acidic residues. The next 7 helical transmembrane spans lie at 647–667 (WLNG…KVWT), 682–702 (FFYQ…YFLV), 722–742 (ILSV…FVLS), 757–777 (IVIF…FMAV), 804–823 (LVVA…FLYF), 930–950 (VLVW…TGGF), and 967–987 (AAVF…FRFI).

The protein belongs to the chitin synthase family.

The protein localises to the cell membrane. It catalyses the reaction [(1-&gt;4)-N-acetyl-beta-D-glucosaminyl](n) + UDP-N-acetyl-alpha-D-glucosamine = [(1-&gt;4)-N-acetyl-beta-D-glucosaminyl](n+1) + UDP + H(+). Its function is as follows. Polymerizes chitin, a structural polymer of the cell wall and septum, by transferring the sugar moiety of UDP-GlcNAc to the non-reducing end of the growing chitin polymer. The sequence is that of Chitin synthase 2 (CHS2) from Candida albicans (Yeast).